The primary structure comprises 221 residues: Deep sea actinoporin Cjtox II (221 aa).

A signal peptide spans 1–19; sequence MNRLIIVCLVAAMIYSTIA. Positions 20 to 42 are excised as a propeptide; it reads LPMKEDISNDERPISVNEEPVKK. The phosphocholine site is built by Ser-96, Val-129, Ser-147, Pro-149, Tyr-175, Tyr-179, and Tyr-180. The segment at 147-162 is trp-rich region, which is important for the binding to lipid membrane; it reads SVPYDYNWYENWWNIK. The short motif at 186–188 is the Cell attachment site, crucial for protein stability element; sequence KGD.

This sequence belongs to the actinoporin family. Sea anemone subfamily. As to quaternary structure, octamer or nonamer in membranes. Monomer in the soluble state. As to expression, expressed in actinopharynx and in gastric filaments. Is not expressed in tentacles.

The protein resides in the secreted. It is found in the nematocyst. Its subcellular location is the target cell membrane. In terms of biological role, may be involved in digestion of prey. Pore-forming protein that forms cations-selective hydrophilic pores of around 1 nm and causes cytolysis. Pore formation is a multi-step process that involves specific recognition of membrane sphingomyelin (but neither cholesterol nor phosphatidylcholine) using aromatic rich region and adjacent phosphocholine (POC) binding site, firm binding to the membrane (mainly driven by hydrophobic interactions) accompanied by the transfer of the N-terminal region to the lipid-water interface and finally pore formation after oligomerization of monomers. Shows hemolytic activity on equine erythrocytes. Hemolysis is highly inhibited in presence of sphingomyelin, suggesting that this protein targets sphingomyelin. This chain is Deep sea actinoporin Cjtox II, found in Cribrinopsis japonica (Deep-sea anemone).